Consider the following 306-residue polypeptide: D-alanine--D-alanine ligase (306 aa).

Residues 102 to 300 (KIVVASVGVS…YGDIVQWMVE (199 aa)) enclose the ATP-grasp domain. ATP is bound at residue 128-183 (PMEPPYVIKPVCEGSSLGVIIVKENESVPSLNVVGSEWVYADTVIVEKYIPGRELT). Mg(2+) is bound by residues Asp-253, Glu-267, and Asn-269.

It belongs to the D-alanine--D-alanine ligase family. Mg(2+) serves as cofactor. It depends on Mn(2+) as a cofactor.

It localises to the cytoplasm. It catalyses the reaction 2 D-alanine + ATP = D-alanyl-D-alanine + ADP + phosphate + H(+). Its pathway is cell wall biogenesis; peptidoglycan biosynthesis. Cell wall formation. This Bartonella henselae (strain ATCC 49882 / DSM 28221 / CCUG 30454 / Houston 1) (Rochalimaea henselae) protein is D-alanine--D-alanine ligase.